Reading from the N-terminus, the 292-residue chain is Troponin I (292 aa).

Serine 1 carries the N-acetylserine modification. Residues 1–149 (SSLEERRAAR…GLGGLSPEKK (149 aa)) form a disordered region. The span at 46-55 (YSAPAEPAYD) shows a compositional bias: low complexity. Residues 58-134 (AENRRRQQQE…EARRMAEEQK (77 aa)) show a composition bias toward basic and acidic residues. The actin-binding stretch occupies residues 237-250 (DTKGKFVKPVLRKV). The interval 255–292 (SKLDKIQRKEAKKSDFRDNLKSSREHEADKEGGEGENE) is disordered.

Belongs to the troponin I family.

Its function is as follows. Troponin I is the inhibitory subunit of troponin, the thin filament regulatory complex which confers calcium-sensitivity to striated muscle actomyosin ATPase activity. This chain is Troponin I, found in Chlamys nipponensis akazara (Akazara scallop).